Reading from the N-terminus, the 210-residue chain is LexA repressor (210 aa).

The H-T-H motif DNA-binding region spans 31–51 (RVEISKELGFRSPNAAEEHLK). Catalysis depends on for autocatalytic cleavage activity residues serine 126 and lysine 163.

Belongs to the peptidase S24 family. As to quaternary structure, homodimer.

The enzyme catalyses Hydrolysis of Ala-|-Gly bond in repressor LexA.. Its function is as follows. Represses a number of genes involved in the response to DNA damage (SOS response), including recA and lexA. In the presence of single-stranded DNA, RecA interacts with LexA causing an autocatalytic cleavage which disrupts the DNA-binding part of LexA, leading to derepression of the SOS regulon and eventually DNA repair. The sequence is that of LexA repressor from Histophilus somni (strain 129Pt) (Haemophilus somnus).